The following is a 173-amino-acid chain: Co-chaperone protein HscB homolog (173 aa).

Residues 5–77 enclose the J domain; sequence CHFALFELQP…PKRARYLLAM (73 aa).

The protein belongs to the HscB family. Interacts with HscA and stimulates its ATPase activity.

Functionally, co-chaperone involved in the maturation of iron-sulfur cluster-containing proteins. Seems to help targeting proteins to be folded toward HscA. The chain is Co-chaperone protein HscB homolog from Pseudomonas fluorescens (strain SBW25).